A 566-amino-acid chain; its full sequence is MSELETGTAAHGTPVENKSVSSSQASTPTNVGSRDDLKVDDDNHSVDAIELPKKPRSAYITVSILCLMVAFGGFVFGWDTGTISGFVNQTDFIRRFGQEKADGSHYLSNVRTGLIVSIFNIGCAIGGIILSKLGDMYGRRIGLMIVVLIYVVGIIIQIASIDKWYQYFIGRIISGLGVGGISVLSPMLISETAPKHIRGTLVSFYQLMITFGIFLGYCTNYGTKTYSNSVQWRVPLGLCFAWAIFMITGMLFVPESPRFLVEKDRIDEAKRSIAKSNKVSYEDPAVQAEVDLICAGVEAERLAGSASIKELFSTKTKVFQRLIMGMLIQSFQQLTGNNYFFYYGTTIFNSVGMDDSFETSIVLGIVNFASTFVAIYVVDKFGRRKCLLWGAAAMTACMVVFASVGVTRLWPDGANHPETASKGAGNCMIVFACFYIFCFATSWAPIAYVVVAESYPLRVKAKCMAIATASNWIWGFLNGFFTPFITSAIHFYYGYVFMGCLVAMFFYVFFFVPETKGLTLEEVQEMWEEGVLPWKSSSWVPSSRRNAGYDVDALQHDEKPWYKAML.

Residues M1–V39 are disordered. Over residues E16–G32 the composition is skewed to polar residues. The Cytoplasmic portion of the chain corresponds to S22–T61. Residues V62 to T82 form a helical membrane-spanning segment. Residues I83 to T112 are Extracellular-facing. N88 carries N-linked (GlcNAc...) asparagine glycosylation. A helical membrane pass occupies residues G113 to L133. Residues G134 to R140 lie on the Cytoplasmic side of the membrane. Residues I141–I161 form a helical membrane-spanning segment. At D162–Q166 the chain is on the extracellular side. The chain crosses the membrane as a helical span at residues Y167–M187. Residues L188–R198 lie on the Cytoplasmic side of the membrane. A helical membrane pass occupies residues G199–T219. Residues N220–R233 lie on the Extracellular side of the membrane. Residues V234 to P254 traverse the membrane as a helical segment. At E255–Q333 the chain is on the cytoplasmic side. The chain crosses the membrane as a helical span at residues L334–M353. Over D354–F357 the chain is Extracellular. A helical membrane pass occupies residues E358 to V378. At D379–K385 the chain is on the cytoplasmic side. Residues C386–V406 traverse the membrane as a helical segment. The Extracellular portion of the chain corresponds to T407–M428. The chain crosses the membrane as a helical span at residues I429 to V449. The Cytoplasmic segment spans residues V450–A465. Residues I466–T486 form a helical membrane-spanning segment. At S487–Y492 the chain is on the extracellular side. The helical transmembrane segment at Y493–P513 threads the bilayer. The Cytoplasmic segment spans residues E514 to L566.

Belongs to the major facilitator superfamily. Sugar transporter (TC 2.A.1.1) family.

It is found in the membrane. In terms of biological role, probable glucose transporter. The sequence is that of Hexose transporter 2 (KHT2) from Kluyveromyces lactis (Yeast).